Reading from the N-terminus, the 344-residue chain is N,N-dimethyltransferase OxyT (344 aa).

Residues Asp205 and 231–233 (GDF) each bind S-adenosyl-L-methionine.

This sequence belongs to the class I-like SAM-binding methyltransferase superfamily. Cation-independent O-methyltransferase family.

The enzyme catalyses 4-amino-4-dedimethylamino-anhydrotetracycline + S-adenosyl-L-methionine = 4-methylamino-4-dedimethylamino-anhydrotetracycline + S-adenosyl-L-homocysteine + H(+). The catalysed reaction is 4-methylamino-4-dedimethylamino-anhydrotetracycline + S-adenosyl-L-methionine = anhydrotetracycline + S-adenosyl-L-homocysteine + H(+). It functions in the pathway antibiotic biosynthesis; oxytetracycline biosynthesis. Functionally, involved in the biosynthesis of the tetracycline antibiotic, oxytetracycline. Catalyzes the dimethylation of 4-amino-4-de(dimethylamino)anhydrotetracycline (4-amino-ATC) to yield anhydrotetracycline (ATC). Also able to catalyze the dimethylation of 7-chloro-, 6-demethyl-, 2-decarboxamido-2-nitrile-, and 4-methylamino-derivatives of 4-amino-4-de(dimethylamino)anhydrotetracycline. This chain is N,N-dimethyltransferase OxyT, found in Streptomyces rimosus.